The following is a 418-amino-acid chain: Gamma-glutamyl phosphate reductase (418 aa).

The protein belongs to the gamma-glutamyl phosphate reductase family.

It is found in the cytoplasm. The catalysed reaction is L-glutamate 5-semialdehyde + phosphate + NADP(+) = L-glutamyl 5-phosphate + NADPH + H(+). It participates in amino-acid biosynthesis; L-proline biosynthesis; L-glutamate 5-semialdehyde from L-glutamate: step 2/2. Functionally, catalyzes the NADPH-dependent reduction of L-glutamate 5-phosphate into L-glutamate 5-semialdehyde and phosphate. The product spontaneously undergoes cyclization to form 1-pyrroline-5-carboxylate. This chain is Gamma-glutamyl phosphate reductase, found in Chlorobium limicola (strain DSM 245 / NBRC 103803 / 6330).